The chain runs to 244 residues: 5'-deoxynucleotidase (244 aa).

It catalyses the reaction a 2'-deoxyribonucleoside 5'-phosphate + H2O = a 2'-deoxyribonucleoside + phosphate. Following host DNA degradation, is responsible for the degradation of 5'-dNMP's to deoxynucleosides that can be further excreted. Active on deoxynucleoside 5'-monophosphates but not active as a phosphatase on ribonucleotides, deoxynucleoside 5'-triphosphates, deoxynucleoside 3'-monophosphates, or deoxyoligonucleotides. The chain is 5'-deoxynucleotidase (dmp) from Escherichia coli (Enterobacteria phage T5).